Consider the following 227-residue polypeptide: 2-C-methyl-D-erythritol 4-phosphate cytidylyltransferase (227 aa).

Belongs to the IspD/TarI cytidylyltransferase family. IspD subfamily.

It catalyses the reaction 2-C-methyl-D-erythritol 4-phosphate + CTP + H(+) = 4-CDP-2-C-methyl-D-erythritol + diphosphate. It participates in isoprenoid biosynthesis; isopentenyl diphosphate biosynthesis via DXP pathway; isopentenyl diphosphate from 1-deoxy-D-xylulose 5-phosphate: step 2/6. In terms of biological role, catalyzes the formation of 4-diphosphocytidyl-2-C-methyl-D-erythritol from CTP and 2-C-methyl-D-erythritol 4-phosphate (MEP). The protein is 2-C-methyl-D-erythritol 4-phosphate cytidylyltransferase of Nostoc punctiforme (strain ATCC 29133 / PCC 73102).